The primary structure comprises 314 residues: PDCD10 and GCKIII kinases-associated protein 1 (314 aa).

At S30 the chain carries Phosphoserine. The tract at residues 36–142 (DDTDKLKGKW…TQPFLEGGGT (107 aa)) is disordered. Residue T106 is modified to Phosphothreonine. Positions 107-116 (PQPTGNSSPT) are enriched in polar residues. Residues S238 and S241 each carry the phosphoserine modification. A disordered region spans residues 267 to 291 (VDSGNRQEDTHGSDGDGDGEIVDED). Positions 271 to 280 (NRQEDTHGSD) are enriched in basic and acidic residues. Positions 281–291 (GDGDGEIVDED) are enriched in acidic residues.

In terms of assembly, interacts with KEAP1; this interaction prevents the ubiquitination of KEAP1 by TRIM25, thus protecting KEAP1 from degradation. Found in association with PDCD10 and members of the STE20 kinases, such as STK24, STK25 and STK26.

The protein resides in the cell membrane. Functionally, acts as a tumor suppressor. Acts as a tumor suppressor for colorectal cancer cell proliferation by targeting KEAP1/USP17/ELK1/CDK6 axis. The sequence is that of PDCD10 and GCKIII kinases-associated protein 1 from Homo sapiens (Human).